Here is a 309-residue protein sequence, read N- to C-terminus: Methionyl-tRNA formyltransferase (309 aa).

107-110 (SLLP) contributes to the (6S)-5,6,7,8-tetrahydrofolate binding site.

Belongs to the Fmt family.

It carries out the reaction L-methionyl-tRNA(fMet) + (6R)-10-formyltetrahydrofolate = N-formyl-L-methionyl-tRNA(fMet) + (6S)-5,6,7,8-tetrahydrofolate + H(+). Attaches a formyl group to the free amino group of methionyl-tRNA(fMet). The formyl group appears to play a dual role in the initiator identity of N-formylmethionyl-tRNA by promoting its recognition by IF2 and preventing the misappropriation of this tRNA by the elongation apparatus. The sequence is that of Methionyl-tRNA formyltransferase from Borrelia recurrentis (strain A1).